We begin with the raw amino-acid sequence, 261 residues long: Aquaporin-8 (261 aa).

At 1-36 the chain is on the cytoplasmic side; it reads MSGEQTPMCSMDLPEVKVKTSMAGRCRVFWYEQYVQ. A helical membrane pass occupies residues 37–57; that stretch reads PCIVELVGSALFIFIGCLSVI. Cysteine persulfide is present on Cys53. The residue at position 53 (Cys53) is a Cysteine sulfenic acid (-SOH). At 58-84 the chain is on the extracellular side; the sequence is ENSPNTGLLQPALAHGLALGLIIATLG. The helical transmembrane segment at 85 to 105 threads the bilayer; it reads NISGGHFNPAVSLAVTVIGGL. Residues 92 to 94 carry the NPA 1 motif; the sequence is NPA. Residues 106-107 are Cytoplasmic-facing; sequence KT. Residues 108–128 traverse the membrane as a helical segment; the sequence is MLLIPYWISQLFGGLIGAALA. Topologically, residues 129-156 are extracellular; the sequence is KVVSPEERFWNASGAAFAIVQEQEQVAE. Asn139 carries an N-linked (GlcNAc...) asparagine glycan. The chain crosses the membrane as a helical span at residues 157-177; sequence ALGIEIILTMLLVLAVCMGAV. Residues 178–183 are Cytoplasmic-facing; it reads NEKTMG. Residues 184–204 form a helical membrane-spanning segment; the sequence is PLAPFSIGFSVIVDILAGGSI. At 205–228 the chain is on the extracellular side; that stretch reads SGACMNPARAFGPAVMAGYWDFHW. Positions 210-212 match the NPA 2 motif; that stretch reads NPA. A helical transmembrane segment spans residues 229 to 249; that stretch reads IYWLGPLLAGLFVGLLIRLLI. Residues 250 to 261 are Cytoplasmic-facing; it reads GDEKTRLILKSR.

Belongs to the MIP/aquaporin (TC 1.A.8) family. Post-translationally, sulfenylation at Cys-53(C53-SOH) when hydrogen peroxide flows through the AQP8 channel, making it susceptible to hydrogen sulfide produced by CBS. In terms of processing, persulfidation at Cys-53 is required to gate AQP8 channel; under stress condition, hydrogen peroxide accumulates in the cell leading to CBS activation that produces hydrogen sulfide inducing persulfidation of oxidized Cys-53 (C53-SOH). N-glycosylated. In terms of tissue distribution, expressed in placenta. Highly expressed in the epithelial layer of gall-bladders. Expressed in heart, kidney, submandibular gland, liver, small intestine, colon, testes, and epididymis. In testes, expressed in spermatogenic cells.

The protein localises to the cell membrane. The protein resides in the mitochondrion inner membrane. It is found in the apical cell membrane. Its subcellular location is the basolateral cell membrane. It localises to the smooth endoplasmic reticulum membrane. It carries out the reaction H2O(in) = H2O(out). The catalysed reaction is urea(in) = urea(out). It catalyses the reaction NH4(+)(in) = NH4(+)(out). The enzyme catalyses H2O2(out) = H2O2(in). It carries out the reaction formamide(out) = formamide(in). The catalysed reaction is methylamine(out) = methylamine(in). Its activity is regulated as follows. Reversibly gated by a two-step sulfenylation-persulfidation process in cells undergoing diverse stresses. In terms of biological role, channel that allows the facilitated permeation of water and uncharged molecules, such as hydrogen peroxide and the neutral form of ammonia (NH3), through cellular membranes such as plasma membrane, inner mitochondrial membrane and endoplasmic reticulum membrane of several tissues. The transport of ammonia neutral form induces a parallel transport of proton, at alkaline pH when the concentration of ammonia is high. However, it is unclear whether the transport of proton takes place via the aquaporin or via an endogenous pathway. Also, may transport ammonia analogs such as formamide and methylamine, a transport favourited at basic pH due to the increase of unprotonated (neutral) form, which is expected to favor diffusion. In vitro, may be also permeable to urea but not to glycerol. Does not transport urea or glycerol. The water transport mechanism is mercury- and copper-sensitive and passive in response to osmotic driving forces. At the canicular plasma membrane, mediates the osmotic transport of water toward the bile canaliculus and facilitates the cAMP-induced bile canalicular water secretion, a process involved in bile formation. In addition, mediates the hydrogen peroxide release from hepatocyte mitochondria that modulates the SREBF2-mediated cholesterol synthesis and facilitates the mitochondrial ammonia uptake which is metabolized into urea, mainly under glucagon stimulation. In B cells, transports the CYBB-generated hydrogen peroxide from the external leaflet of the plasma membrane to the cytosol to promote B cell activation and differentiation for signal amplification. In the small intestine and colon system, mediates water transport through mitochondria and apical membrane of epithelial cells. May play an important role in the adaptive response of proximal tubule cells to acidosis possibly facilitating mitochondrial ammonia transport. The polypeptide is Aquaporin-8 (Mus musculus (Mouse)).